The chain runs to 366 residues: Ribosomal RNA large subunit methyltransferase M (366 aa).

S-adenosyl-L-methionine-binding positions include Ser188, Cys221–Gly224, Asp240, Asp260, and Asp277. Lys306 serves as the catalytic Proton acceptor.

The protein belongs to the class I-like SAM-binding methyltransferase superfamily. RNA methyltransferase RlmE family. RlmM subfamily. In terms of assembly, monomer.

The protein resides in the cytoplasm. The enzyme catalyses cytidine(2498) in 23S rRNA + S-adenosyl-L-methionine = 2'-O-methylcytidine(2498) in 23S rRNA + S-adenosyl-L-homocysteine + H(+). Catalyzes the 2'-O-methylation at nucleotide C2498 in 23S rRNA. The protein is Ribosomal RNA large subunit methyltransferase M of Erwinia tasmaniensis (strain DSM 17950 / CFBP 7177 / CIP 109463 / NCPPB 4357 / Et1/99).